We begin with the raw amino-acid sequence, 163 residues long: F-box protein At2g35280 (163 aa).

The F-box domain maps to 8-57 (ISRLEALPQDLLREIVAKIGVKSAEDYHNCILSCKELGASANDERVLKTL).

The polypeptide is F-box protein At2g35280 (Arabidopsis thaliana (Mouse-ear cress)).